The chain runs to 338 residues: Biotin synthase (338 aa).

One can recognise a Radical SAM core domain in the interval 50–277; it reads QAVQLSTLMS…KSYVRLSAGR (228 aa). The [4Fe-4S] cluster site is built by cysteine 65, cysteine 69, and cysteine 72. Residues cysteine 109, cysteine 140, cysteine 200, and arginine 272 each coordinate [2Fe-2S] cluster.

The protein belongs to the radical SAM superfamily. Biotin synthase family. In terms of assembly, homodimer. [4Fe-4S] cluster is required as a cofactor. The cofactor is [2Fe-2S] cluster.

It carries out the reaction (4R,5S)-dethiobiotin + (sulfur carrier)-SH + 2 reduced [2Fe-2S]-[ferredoxin] + 2 S-adenosyl-L-methionine = (sulfur carrier)-H + biotin + 2 5'-deoxyadenosine + 2 L-methionine + 2 oxidized [2Fe-2S]-[ferredoxin]. The protein operates within cofactor biosynthesis; biotin biosynthesis; biotin from 7,8-diaminononanoate: step 2/2. Catalyzes the conversion of dethiobiotin (DTB) to biotin by the insertion of a sulfur atom into dethiobiotin via a radical-based mechanism. The protein is Biotin synthase of Actinobacillus succinogenes (strain ATCC 55618 / DSM 22257 / CCUG 43843 / 130Z).